A 586-amino-acid chain; its full sequence is Maltogenic alpha-amylase (586 aa).

5 residues coordinate Ca(2+): Asn147, Asn152, Asp153, Gly172, and Asp174. Substrate is bound by residues His247 and Arg326. Residue Asp328 is the Nucleophile of the active site. The active-site Proton donor is the Glu357. Substrate is bound by residues 423–424 (HD), Asp468, and Arg472.

This sequence belongs to the glycosyl hydrolase 13 family. Ca(2+) is required as a cofactor.

The enzyme catalyses hydrolysis of (1-&gt;4)-alpha-D-glucosidic linkages in polysaccharides so as to remove successive alpha-maltose residues from the non-reducing ends of the chains.. Converts starch into maltose. In Bacillus acidopullulyticus, this protein is Maltogenic alpha-amylase.